A 619-amino-acid polypeptide reads, in one-letter code: Dihydroxy-acid dehydratase (619 aa).

Asp81 contributes to the Mg(2+) binding site. Position 122 (Cys122) interacts with [2Fe-2S] cluster. 2 residues coordinate Mg(2+): Asp123 and Lys124. Lys124 carries the N6-carboxylysine modification. Cys201 is a binding site for [2Fe-2S] cluster. Glu496 serves as a coordination point for Mg(2+). Ser522 (proton acceptor) is an active-site residue.

It belongs to the IlvD/Edd family. As to quaternary structure, homodimer. The cofactor is [2Fe-2S] cluster. It depends on Mg(2+) as a cofactor.

It carries out the reaction (2R)-2,3-dihydroxy-3-methylbutanoate = 3-methyl-2-oxobutanoate + H2O. The catalysed reaction is (2R,3R)-2,3-dihydroxy-3-methylpentanoate = (S)-3-methyl-2-oxopentanoate + H2O. Its pathway is amino-acid biosynthesis; L-isoleucine biosynthesis; L-isoleucine from 2-oxobutanoate: step 3/4. It functions in the pathway amino-acid biosynthesis; L-valine biosynthesis; L-valine from pyruvate: step 3/4. Functions in the biosynthesis of branched-chain amino acids. Catalyzes the dehydration of (2R,3R)-2,3-dihydroxy-3-methylpentanoate (2,3-dihydroxy-3-methylvalerate) into 2-oxo-3-methylpentanoate (2-oxo-3-methylvalerate) and of (2R)-2,3-dihydroxy-3-methylbutanoate (2,3-dihydroxyisovalerate) into 2-oxo-3-methylbutanoate (2-oxoisovalerate), the penultimate precursor to L-isoleucine and L-valine, respectively. This Paracidovorax citrulli (strain AAC00-1) (Acidovorax citrulli) protein is Dihydroxy-acid dehydratase.